We begin with the raw amino-acid sequence, 523 residues long: UDP-glucuronosyltransferase 3A2 (523 aa).

The signal sequence occupies residues 1–22; that stretch reads MAGQRVLLLVGFLLPGVLLSEA. Topologically, residues 23-483 are extracellular; that stretch reads AKILTISTVG…YVFQQPWHEQ (461 aa). An N-linked (GlcNAc...) asparagine glycan is attached at Asn52. A helical transmembrane segment spans residues 484–504; the sequence is YLLDVFVFLLGLTLGTLWLCG. Over 505-523 the chain is Cytoplasmic; it reads KLLGMAVWWLRGARKVKET.

It belongs to the UDP-glycosyltransferase family.

The protein localises to the membrane. It catalyses the reaction glucuronate acceptor + UDP-alpha-D-glucuronate = acceptor beta-D-glucuronoside + UDP + H(+). UDP-glucuronosyltransferases catalyze phase II biotransformation reactions in which lipophilic substrates are conjugated with glucuronic acid to increase water solubility and enhance excretion. They are of major importance in the conjugation and subsequent elimination of potentially toxic xenobiotics and endogenous compounds. This is UDP-glucuronosyltransferase 3A2 (UGT3A2) from Homo sapiens (Human).